The chain runs to 970 residues: Bifunctional glutamine synthetase adenylyltransferase/adenylyl-removing enzyme (970 aa).

The tract at residues 1 to 454 is adenylyl removase; the sequence is MNSLPPRPSL…HFQQVFAAPQ (454 aa). The interval 468–970 is adenylyl transferase; it reads QAVLASIWAG…WRRVMEEGKA (503 aa).

This sequence belongs to the GlnE family. It depends on Mg(2+) as a cofactor.

The catalysed reaction is [glutamine synthetase]-O(4)-(5'-adenylyl)-L-tyrosine + phosphate = [glutamine synthetase]-L-tyrosine + ADP. The enzyme catalyses [glutamine synthetase]-L-tyrosine + ATP = [glutamine synthetase]-O(4)-(5'-adenylyl)-L-tyrosine + diphosphate. In terms of biological role, involved in the regulation of glutamine synthetase GlnA, a key enzyme in the process to assimilate ammonia. When cellular nitrogen levels are high, the C-terminal adenylyl transferase (AT) inactivates GlnA by covalent transfer of an adenylyl group from ATP to specific tyrosine residue of GlnA, thus reducing its activity. Conversely, when nitrogen levels are low, the N-terminal adenylyl removase (AR) activates GlnA by removing the adenylyl group by phosphorolysis, increasing its activity. The regulatory region of GlnE binds the signal transduction protein PII (GlnB) which indicates the nitrogen status of the cell. This is Bifunctional glutamine synthetase adenylyltransferase/adenylyl-removing enzyme from Thioalkalivibrio sulfidiphilus (strain HL-EbGR7).